Consider the following 158-residue polypeptide: MIRIGHGFDVHAFGGEGPIIIGGVAIPYEKGLLAHSDGDVALHALTDALLGAVALGDIGKLFPDTDMQYKGADSRGLLREAYTQVQAKGYKVGNVDVTIIAQAPKMRPHIDAMRAAIAEDLACDIEQVNVKATTSERLGFTGRGEGIACEAVALVVKS.

The a divalent metal cation site is built by D9 and H11. Residues 9–11 (DVH) and 35–36 (HS) contribute to the 4-CDP-2-C-methyl-D-erythritol 2-phosphate site. Residue H43 participates in a divalent metal cation binding. Residues 57–59 (DIG), 62–66 (FPDTD), 133–136 (TTSE), F140, and R143 each bind 4-CDP-2-C-methyl-D-erythritol 2-phosphate.

This sequence belongs to the IspF family. As to quaternary structure, homotrimer. A divalent metal cation serves as cofactor.

The catalysed reaction is 4-CDP-2-C-methyl-D-erythritol 2-phosphate = 2-C-methyl-D-erythritol 2,4-cyclic diphosphate + CMP. Its pathway is isoprenoid biosynthesis; isopentenyl diphosphate biosynthesis via DXP pathway; isopentenyl diphosphate from 1-deoxy-D-xylulose 5-phosphate: step 4/6. Functionally, involved in the biosynthesis of isopentenyl diphosphate (IPP) and dimethylallyl diphosphate (DMAPP), two major building blocks of isoprenoid compounds. Catalyzes the conversion of 4-diphosphocytidyl-2-C-methyl-D-erythritol 2-phosphate (CDP-ME2P) to 2-C-methyl-D-erythritol 2,4-cyclodiphosphate (ME-CPP) with a corresponding release of cytidine 5-monophosphate (CMP). The protein is 2-C-methyl-D-erythritol 2,4-cyclodiphosphate synthase of Pasteurella multocida (strain Pm70).